A 1807-amino-acid chain; its full sequence is Nucleoporin nup189 (1807 aa).

Residues Met-1 to Thr-118 are disordered. GLFG repeat units follow at residues Gly-26–Gly-29 and Gly-66–Gly-69. Residues Gly-29–Ser-61 are compositionally biased toward polar residues. The segment covering Asn-62–Thr-77 has biased composition (low complexity). Residues Gly-78 to Met-90 show a composition bias toward gly residues. The segment covering Gln-93–Pro-108 has biased composition (polar residues). 10 GLFG repeats span residues Gly-112 to Gly-115, Gly-152 to Gly-155, Gly-177 to Gly-180, Gly-308 to Gly-311, Gly-335 to Gly-338, Gly-350 to Gly-353, Gly-381 to Gly-384, Gly-399 to Gly-402, Gly-435 to Gly-438, and Gly-521 to Gly-524. A compositionally biased stretch (polar residues) spans Pro-565–Thr-584. The disordered stretch occupies residues Pro-565–Thr-685. GLFG repeat units follow at residues Gly-585 to Gly-588, Gly-611 to Gly-614, Gly-627 to Gly-630, and Gly-646 to Gly-649. A compositionally biased stretch (low complexity) spans Gly-588–Ser-600. A compositionally biased stretch (polar residues) spans Asn-603 to Gly-644. The segment covering Ala-653–Ser-663 has biased composition (low complexity). Positions Ile-664–Thr-685 are enriched in polar residues. Position 724 is a phosphoserine (Ser-724). A disordered region spans residues Gln-785–Lys-814. Residues Asn-792–Glu-802 are compositionally biased toward basic and acidic residues. Residues Ser-822 to Phe-963 form the Peptidase S59 domain. Positions Glu-974 to Asn-1020 are disordered. Residue Ser-1051 is modified to Phosphoserine. The segment at Lys-1082–Val-1104 is disordered. The span at Ser-1094–Val-1104 shows a compositional bias: low complexity.

Belongs to the nucleoporin GLFG family. In terms of assembly, interacts (via G-L-F-G repeats) with rpn15/dss1. Interacts with raf1. As to quaternary structure, interacts with ned1. In terms of processing, nup189 is autocatalytically cleaved in nup98 and nup96.

The protein resides in the nucleus. Its subcellular location is the nuclear pore complex. In terms of biological role, functions as a component of the nuclear pore complex (NPC). NPC components, collectively referred to as nucleoporins (NUPs), can play the role of both NPC structural components and of docking or interaction partners for transiently associated nuclear transport factors. Active directional transport is assured by both, a Phe-Gly (FG) repeat affinity gradient for these transport factors across the NPC and a transport cofactor concentration gradient across the nuclear envelope. Nup189 is autocatalytically cleaved in vivo in 2 polypeptides which assume different functions in the NPC. Nup98 as one of the FG repeat nucleoporins participates in karyopherin interactions and contains part of the autocatalytic cleavage activity. Nup96 as part of the NUP84 complex is involved in nuclear poly(A)+ RNA and tRNA export. The protein is Nucleoporin nup189 (nup189) of Schizosaccharomyces pombe (strain 972 / ATCC 24843) (Fission yeast).